The following is a 344-amino-acid chain: tRNA N6-adenosine threonylcarbamoyltransferase (344 aa).

Fe cation contacts are provided by His-118 and His-122. Residues 141 to 145 (TASGG), Asp-174, Gly-187, and Asn-284 contribute to the substrate site. Asp-312 contributes to the Fe cation binding site.

It belongs to the KAE1 / TsaD family. Fe(2+) serves as cofactor.

Its subcellular location is the cytoplasm. It carries out the reaction L-threonylcarbamoyladenylate + adenosine(37) in tRNA = N(6)-L-threonylcarbamoyladenosine(37) in tRNA + AMP + H(+). In terms of biological role, required for the formation of a threonylcarbamoyl group on adenosine at position 37 (t(6)A37) in tRNAs that read codons beginning with adenine. Is involved in the transfer of the threonylcarbamoyl moiety of threonylcarbamoyl-AMP (TC-AMP) to the N6 group of A37, together with TsaE and TsaB. TsaD likely plays a direct catalytic role in this reaction. The chain is tRNA N6-adenosine threonylcarbamoyltransferase from Desulfotalea psychrophila (strain LSv54 / DSM 12343).